Here is a 1336-residue protein sequence, read N- to C-terminus: Aldehyde oxidase 4 (1336 aa).

One can recognise a 2Fe-2S ferredoxin-type domain in the interval 8 to 95 (DELIFFVNGK…GAAITTVEGV (88 aa)). The [2Fe-2S] cluster site is built by C47, C52, C55, and C77. Q116 lines the Mo-molybdopterin pocket. 4 residues coordinate [2Fe-2S] cluster: C117, C120, C152, and C154. C154 serves as a coordination point for Mo-molybdopterin. The FAD-binding PCMH-type domain maps to 237 to 423 (FQGKRTTWII…LSIFIPYTAQ (187 aa)). Residues 265 to 272 (LVMGNTTV), A346, T355, H359, D368, and I413 contribute to the FAD site. Residues 804-805 (AF), L1045, 1086-1089 (GSMG), Q1201, and L1265 each bind Mo-molybdopterin. The active-site Proton acceptor; for azaheterocycle hydroxylase activity is the E1267.

This sequence belongs to the xanthine dehydrogenase family. As to quaternary structure, homodimer. [2Fe-2S] cluster is required as a cofactor. Requires FAD as cofactor. It depends on Mo-molybdopterin as a cofactor. As to expression, highly expressed in Harderian glands and sebaceous glands with detectable levels in the epidermis and other keratinized epithelia (at protein level). Detected in testis. The expression is 3 times greater in females than in males.

The protein localises to the cytoplasm. The catalysed reaction is an aldehyde + O2 + H2O = a carboxylate + H2O2 + H(+). It catalyses the reaction retinal + O2 + H2O = retinoate + H2O2 + H(+). The enzyme catalyses all-trans-retinal + O2 + H2O = all-trans-retinoate + H2O2 + H(+). Its function is as follows. Aldehyde oxidase able to catalyze the oxidation of retinaldehyde into retinoate. Is responsible for the major all-trans-retinaldehyde-metabolizing activity in the Harderian gland, and contributes a significant amount of the same activity in the skin. Is devoid of pyridoxal-oxidizing activity, in contrast to the other aldehyde oxidases. Acts as a negative modulator of the epidermal trophism. May be able to oxidize a wide variety of aldehydes into their corresponding carboxylates and to hydroxylate azaheterocycles. The polypeptide is Aldehyde oxidase 4 (Aox4) (Mus musculus (Mouse)).